Reading from the N-terminus, the 919-residue chain is MRRSDGHEETSEFLPMTHSRSVSAASQTSTDSSLSTESLFPREQKPFPNAMGGMALADDDKYRDLEDGEAELSEPFLSSSKKAATGGGRARRIFWILVLLCLGGWLLAFVLFLTGGRANYQTASDALQAHGADSALGSTSTSSGKPVTLQQVLGGQWNPRYHAIGWVAGPNNEDGLLVEKGGDEKQGYLRVDDIRSRKGNNTGRESRVLMRKPIVHVDGQAIVPSNVWPSPDLKKVLLISEQQKNWRHSFTGKYWVFDVDSQTAQPLDPSAPDGRVQLALWSPASDAVVFVRDNNLYLRRLSSDSVVAITKDGGENLFYGVPDWVYEEEVISGNSVTWWSNDAKYIAFFRTNETSVPEFPVQYYISRPSGKKPLPGLENYPDVREIKYPKPGAPNPVVDLQFYDVEKNEVFSVQVADDFADDDRIIIEVLWASEGKILVRSTNRESDILKVYLIDTQSRTGKLVRSEDVAGLDGGWVEPSQSTRFVPADPNNGRPHDGYIDTVPYNGYDHLAYFSPLDNPNALMLTSGEWEVVDAPAAVDLQRGLVYFVGTKEAPTQRHVYRVQLDGSNLNPLTDTSKPGYYDVSFSHGTGYALLTYKGPSIPWQAIINTHGDEITYEDRIEDNAQLTKMVEAYALPTEVYQNVTVDGYTLQVVERRPPHFNPAKKYPVLFYLYGGPGSQTVDRKFTVDFQSYVASSLGYIVVTVDGRGTGFIGRKARCIVRGNLGFYEAHDQIATAKMWAAKSYVDETRMAIWGWSFGGFMTLKTLEQDAGRTFQYGMAVAPVTDWRFYDSIYTERYMHTPQHNPNGYDNSTITDMAALSESVRFLVMHGASDDNVHLQNTLVLIDKLDLSNVENYDVQFYPDSDHSIYFHNAHMMVYHRLSDWLVNAFNGEWHLIAKPVPDESMWERMKRSLRLLSP.

The span at 1–10 shows a compositional bias: basic and acidic residues; sequence MRRSDGHEET. The interval 1–53 is disordered; sequence MRRSDGHEETSEFLPMTHSRSVSAASQTSTDSSLSTESLFPREQKPFPNAMGG. Residues 1–92 lie on the Cytoplasmic side of the membrane; that stretch reads MRRSDGHEET…AATGGGRARR (92 aa). Low complexity predominate over residues 21 to 38; that stretch reads SVSAASQTSTDSSLSTES. The chain crosses the membrane as a helical; Signal-anchor for type II membrane protein span at residues 93-113; it reads IFWILVLLCLGGWLLAFVLFL. Topologically, residues 114 to 919 are vacuolar; that stretch reads TGGRANYQTA…MKRSLRLLSP (806 aa). N-linked (GlcNAc...) asparagine glycans are attached at residues asparagine 200, asparagine 352, and asparagine 643. Serine 757 serves as the catalytic Charge relay system. N-linked (GlcNAc...) asparagine glycosylation is present at asparagine 811. Catalysis depends on charge relay system residues aspartate 834 and histidine 867.

This sequence belongs to the peptidase S9B family.

It is found in the vacuole membrane. The catalysed reaction is Release of an N-terminal dipeptide, Xaa-Yaa-|-Zaa-, from a polypeptide, preferentially when Yaa is Pro, provided Zaa is neither Pro nor hydroxyproline.. In terms of biological role, type IV dipeptidyl-peptidase which removes N-terminal dipeptides sequentially from polypeptides having unsubstituted N-termini provided that the penultimate residue is proline. This chain is Probable dipeptidyl-aminopeptidase B (dapB), found in Aspergillus fumigatus (strain CBS 144.89 / FGSC A1163 / CEA10) (Neosartorya fumigata).